A 114-amino-acid chain; its full sequence is Iron-sulfur cluster insertion protein ErpA (114 aa).

Iron-sulfur cluster-binding residues include C42, C106, and C108.

The protein belongs to the HesB/IscA family. As to quaternary structure, homodimer. Iron-sulfur cluster is required as a cofactor.

Its function is as follows. Required for insertion of 4Fe-4S clusters for at least IspG. The sequence is that of Iron-sulfur cluster insertion protein ErpA from Erwinia tasmaniensis (strain DSM 17950 / CFBP 7177 / CIP 109463 / NCPPB 4357 / Et1/99).